Reading from the N-terminus, the 239-residue chain is 1-(5-phosphoribosyl)-5-[(5-phosphoribosylamino)methylideneamino] imidazole-4-carboxamide isomerase (239 aa).

The active-site Proton acceptor is Asp8. Asp129 (proton donor) is an active-site residue.

This sequence belongs to the HisA/HisF family.

The protein localises to the cytoplasm. The enzyme catalyses 1-(5-phospho-beta-D-ribosyl)-5-[(5-phospho-beta-D-ribosylamino)methylideneamino]imidazole-4-carboxamide = 5-[(5-phospho-1-deoxy-D-ribulos-1-ylimino)methylamino]-1-(5-phospho-beta-D-ribosyl)imidazole-4-carboxamide. The protein operates within amino-acid biosynthesis; L-histidine biosynthesis; L-histidine from 5-phospho-alpha-D-ribose 1-diphosphate: step 4/9. This is 1-(5-phosphoribosyl)-5-[(5-phosphoribosylamino)methylideneamino] imidazole-4-carboxamide isomerase from Bacillus mycoides (strain KBAB4) (Bacillus weihenstephanensis).